The following is a 687-amino-acid chain: Probable intron-encoded endonuclease aI3 (687 aa).

The COX1 exons 1 to 3 encoded stretch occupies residues 1-374 (MKQMSYVTRW…NASMDVAFHD (374 aa)). 10 helical membrane passes run 19-39 (IGMT…GMSV), 69-89 (LLMM…NFFL), 103-123 (LNNI…CSVL), 152-172 (AMFA…NFMV), 188-208 (PLFA…LPVL), 240-260 (LFWF…FGVM), 273-293 (FGEM…FLVW), 315-335 (MVIA…IYGG), 341-361 (VPML…LTGV), and 376-396 (IFIY…NNYT). The interval 375-687 (RIFIYYVSFF…KKESLMKFLK (313 aa)) is COX1 intron 3 encoded.

This sequence in the C-terminal section; belongs to the LAGLIDADG endonuclease family. In the N-terminal section; belongs to the heme-copper respiratory oxidase family. The mature protein may arise from proteolytic cleavage of an in-frame translation of COX1 exons 1 to 3 plus intron 3, containing the aI3 open reading frame.

The protein localises to the mitochondrion. The protein resides in the membrane. Mitochondrial DNA endonuclease involved in intron homing. This chain is Probable intron-encoded endonuclease aI3 (aI3), found in Debaryomyces hansenii (strain ATCC 36239 / CBS 767 / BCRC 21394 / JCM 1990 / NBRC 0083 / IGC 2968) (Yeast).